Here is a 262-residue protein sequence, read N- to C-terminus: Adenosylcobinamide-GDP ribazoletransferase (262 aa).

4 helical membrane passes run 43 to 63 (PLAGILIALPAAVTAVLLGAI), 121 to 141 (VALILSFGIRVSALAAFLPLL), 145 to 165 (GGGVALLATAALSRAAMVWHW), and 195 to 215 (GVILALVLFFLSGIPTVAVLL).

It belongs to the CobS family. Mg(2+) serves as cofactor.

It is found in the cell inner membrane. It carries out the reaction alpha-ribazole + adenosylcob(III)inamide-GDP = adenosylcob(III)alamin + GMP + H(+). The catalysed reaction is alpha-ribazole 5'-phosphate + adenosylcob(III)inamide-GDP = adenosylcob(III)alamin 5'-phosphate + GMP + H(+). It participates in cofactor biosynthesis; adenosylcobalamin biosynthesis; adenosylcobalamin from cob(II)yrinate a,c-diamide: step 7/7. In terms of biological role, joins adenosylcobinamide-GDP and alpha-ribazole to generate adenosylcobalamin (Ado-cobalamin). Also synthesizes adenosylcobalamin 5'-phosphate from adenosylcobinamide-GDP and alpha-ribazole 5'-phosphate. In Sinorhizobium medicae (strain WSM419) (Ensifer medicae), this protein is Adenosylcobinamide-GDP ribazoletransferase.